Consider the following 601-residue polypeptide: Glutathione-regulated potassium-efflux system protein KefB (601 aa).

The next 13 membrane-spanning stretches (helical) occupy residues 4-24, 29-49, 55-75, 87-107, 111-131, 152-172, 177-197, 207-227, 230-250, 262-282, 284-304, 324-344, and 356-376; these read ADLLTAGVLFLFAAVAAVPLA, IGAVLGYLLAGIAIGPWGLGF, EILHFSELGVVFLMFIIGLEL, IFGVGAAQVLLSAAVLAGLLM, FLWQAAVVGGIGLAMSSTAMA, VLLFQDLAVIPALALVPLLAG, HFDWFKVAMKVLAFAVMLIGG, FIAASGVREVFTAATLLLVLS, LFMDALGLSMALGTFIAGVLL, AIDPFKGLLLGLFFISVGMSL, LGVLYTHLLWVAASVVILVVI, MQFASVLSQGGEFAFVLFSTA, and ALLLVTVTLSMMTTPLLMKGI. An RCK N-terminal domain is found at 400-519; sequence KPQVIVVGFG…AGVTQFSRET (120 aa).

It belongs to the monovalent cation:proton antiporter 2 (CPA2) transporter (TC 2.A.37) family. KefB subfamily. Interacts with the regulatory subunit KefG.

Its subcellular location is the cell inner membrane. Its function is as follows. Pore-forming subunit of a potassium efflux system that confers protection against electrophiles. Catalyzes K(+)/H(+) antiport. In Salmonella paratyphi C (strain RKS4594), this protein is Glutathione-regulated potassium-efflux system protein KefB.